The following is a 156-amino-acid chain: Ribonuclease pancreatic (156 aa).

A signal peptide spans 1-28 (MALEKSLALLPLLVLVLLVLGWVQPSLG). Positions 33 to 43 (AKKFQRQHMDS) are enriched in basic and acidic residues. Residues 33–52 (AKKFQRQHMDSDGSPSSNPT) form a disordered region. K35 and R38 together coordinate substrate. Catalysis depends on H40, which acts as the Proton acceptor. 4 disulfides stabilise this stretch: C54/C112, C68/C123, C86/C138, and C93/C100. A glycan (N-linked (GlcNAc...) asparagine) is linked at N62. Substrate-binding positions include 69–73 (KPVNT), K94, and R113. A glycan (N-linked (GlcNAc...) asparagine) is linked at N116. H147 serves as the catalytic Proton donor.

Belongs to the pancreatic ribonuclease family. As to quaternary structure, monomer. Interacts with and forms tight 1:1 complexes with RNH1. Dimerization of two such complexes may occur. Interaction with RNH1 inhibits this protein.

It is found in the secreted. It catalyses the reaction an [RNA] containing cytidine + H2O = an [RNA]-3'-cytidine-3'-phosphate + a 5'-hydroxy-ribonucleotide-3'-[RNA].. The catalysed reaction is an [RNA] containing uridine + H2O = an [RNA]-3'-uridine-3'-phosphate + a 5'-hydroxy-ribonucleotide-3'-[RNA].. Functionally, endonuclease that catalyzes the cleavage of RNA on the 3' side of pyrimidine nucleotides. Acts on single-stranded and double-stranded RNA. This is Ribonuclease pancreatic (RNASE1) from Saimiri sciureus (Common squirrel monkey).